The chain runs to 556 residues: 2-isopropylmalate synthase (556 aa).

Residues 33-307 (PIWCSSDLRD…NPELDFSDID (275 aa)) enclose the Pyruvate carboxyltransferase domain. Positions 42, 246, 248, and 282 each coordinate Mg(2+). The interval 439–556 (ANTPYALISH…SLSQAQAKAA (118 aa)) is regulatory domain.

This sequence belongs to the alpha-IPM synthase/homocitrate synthase family. LeuA type 2 subfamily. Homodimer. The cofactor is Mg(2+).

It is found in the cytoplasm. The enzyme catalyses 3-methyl-2-oxobutanoate + acetyl-CoA + H2O = (2S)-2-isopropylmalate + CoA + H(+). The protein operates within amino-acid biosynthesis; L-leucine biosynthesis; L-leucine from 3-methyl-2-oxobutanoate: step 1/4. Functionally, catalyzes the condensation of the acetyl group of acetyl-CoA with 3-methyl-2-oxobutanoate (2-ketoisovalerate) to form 3-carboxy-3-hydroxy-4-methylpentanoate (2-isopropylmalate). In Pseudomonas syringae pv. tomato (strain ATCC BAA-871 / DC3000), this protein is 2-isopropylmalate synthase.